Here is a 2242-residue protein sequence, read N- to C-terminus: Transcription factor sma-9 (2242 aa).

A coiled-coil region spans residues 120–383 (HQLAQQQAQQ…QQAQQAQLAQ (264 aa)). The span at 317-330 (AAQQAQAQNNASQQ) shows a compositional bias: low complexity. Disordered regions lie at residues 317 to 344 (AAQQAQAQNNASQQRPSVASTPALSSTP), 494 to 553 (TPVA…SMSD), 583 to 617 (GAQSSVDHDSNSGGSTRTSPGPKDSRMLQAASRSQ), 712 to 754 (LAAH…SSFP), and 1323 to 1349 (EDSTSAEPSTSGQSLLMRSPRPQSPPL). Residues 331-344 (RPSVASTPALSSTP) show a composition bias toward polar residues. Composition is skewed to low complexity over residues 494–523 (TPVAVPPMKQNSNPSMNPSSTSTSASATSS) and 539–550 (SSSKAASSGNES). Positions 583-601 (GAQSSVDHDSNSGGSTRTS) are enriched in polar residues. The span at 1324-1338 (DSTSAEPSTSGQSLL) shows a compositional bias: polar residues. 5 C2H2-type zinc fingers span residues 1447-1469 (YICDRCGIRCKKPSMLKKHIKSH), 1475-1499 (FNCTACNFSFKTKGNLTKHLSSKTH), 1700-1722 (LKCDQCDRTFRKISDLTLHQHTH), 1734-1760 (YQCSECKIPIRTKAQLQKHLERNHGVH), and 1790-1814 (FMCVDCDIGFRKHGILAKHLRSKTH). Over residues 2029–2039 (SITSPIVSSST) the composition is skewed to low complexity. 2 disordered regions span residues 2029–2059 (SITSPIVSSSTNFSYRKRSESSLSGSSPTHT) and 2085–2107 (STDKAHASESLSDRLHNKRPRPI). Positions 2085 to 2099 (STDKAHASESLSDRL) are enriched in basic and acidic residues. 2 consecutive C2H2-type zinc fingers follow at residues 2111–2134 (TKCQICADEFSTPIELQVHLHVDH) and 2143–2167 (YKCPRKFCGLNYESLDSLRAHVTAH). Residues 2219 to 2242 (HELYAQTQQGAGSSTSNQSPKAAN) are disordered. Positions 2223–2242 (AQTQQGAGSSTSNQSPKAAN) are enriched in polar residues.

Expressed in the ventral nerve cord (VNC), pharynx, intestine and seam cells (at protein level).

It localises to the nucleus. Functionally, transcription factor, probably acting as a transcriptional activator and repressor, involved in the TGF-beta-like dbl-1 signaling pathway. Plays a role in regulation of body size, and patterning of male-specific genital sensilla (simple sense organs), known as rays, and mating-associated structures, spicules. Required for the dorsoventral patterning of the postembryonic mesodermal lineage (M lineage), acting by antagonizing the TGF-beta-like dbl-1 signaling pathway, in part by repressing expression of transcription factor unc-130. Involved in egg-laying, perhaps via modulation of cholinergic neurotransmission. Involved in production of reactive oxygen species (ROS), acting downstream of the dbl-1 signaling pathway. Plays a role in the mitochondrial unfolded protein response (mtUPR). May play a role in modulating lifespan and in responses to proteotoxic stress. In terms of biological role, transcription factor, probably acting as a transcriptional activator. Required for patterning of male-specific genital sensilla (simple sense organs), known as rays. Dispensable for regulation of body size. The sequence is that of Transcription factor sma-9 from Caenorhabditis elegans.